The chain runs to 140 residues: Small ribosomal subunit protein uS19 (140 aa).

This sequence belongs to the universal ribosomal protein uS19 family.

Its function is as follows. Protein S19 forms a complex with S13 that binds strongly to the 16S ribosomal RNA. The protein is Small ribosomal subunit protein uS19 (rps19) of Sulfurisphaera tokodaii (strain DSM 16993 / JCM 10545 / NBRC 100140 / 7) (Sulfolobus tokodaii).